The sequence spans 189 residues: GMP synthase [glutamine-hydrolyzing] subunit A (189 aa).

Residues K5–Y189 enclose the Glutamine amidotransferase type-1 domain. The Nucleophile role is filled by C79. Catalysis depends on residues H166 and E168.

As to quaternary structure, heterodimer composed of a glutamine amidotransferase subunit (A) and a GMP-binding subunit (B).

The enzyme catalyses XMP + L-glutamine + ATP + H2O = GMP + L-glutamate + AMP + diphosphate + 2 H(+). Its pathway is purine metabolism; GMP biosynthesis; GMP from XMP (L-Gln route): step 1/1. In terms of biological role, catalyzes the synthesis of GMP from XMP. In Methanosarcina barkeri (strain Fusaro / DSM 804), this protein is GMP synthase [glutamine-hydrolyzing] subunit A.